The following is a 109-amino-acid chain: Ubiquitin-related modifier 1 homolog (109 aa).

A 1-thioglycine modification is found at Gly109. Residue Gly109 forms a Glycyl lysine isopeptide (Gly-Lys) (interchain with K-? in acceptor proteins) linkage.

The protein belongs to the URM1 family. C-terminal thiocarboxylation occurs in 2 steps, it is first acyl-adenylated (-COAMP) via the hesA/moeB/thiF part of the MOCS3 homolog, then thiocarboxylated (-COSH) via the rhodanese domain of the MOCS3 homolog.

The protein resides in the cytoplasm. Its pathway is tRNA modification; 5-methoxycarbonylmethyl-2-thiouridine-tRNA biosynthesis. In terms of biological role, acts as a sulfur carrier required for 2-thiolation of mcm(5)S(2)U at tRNA wobble positions of cytosolic tRNA(Lys), tRNA(Glu) and tRNA(Gln). Serves as sulfur donor in tRNA 2-thiolation reaction by being thiocarboxylated (-COSH) at its C-terminus by MOCS3. The sulfur is then transferred to tRNA to form 2-thiolation of mcm(5)S(2)U. Also acts as a ubiquitin-like protein (UBL) that is covalently conjugated via an isopeptide bond to lysine residues of target proteins. The thiocarboxylated form serves as substrate for conjugation and oxidative stress specifically induces the formation of UBL-protein conjugates. The polypeptide is Ubiquitin-related modifier 1 homolog (Culex quinquefasciatus (Southern house mosquito)).